Reading from the N-terminus, the 376-residue chain is Carbamoyl phosphate synthase small chain (376 aa).

Residues 1 to 187 (MKALLVLEDG…AEDGSYAWRG (187 aa)) form a CPSase region. Positions 45, 239, and 241 each coordinate L-glutamine. The region spanning 191 to 376 (PLLVYDFGIK…RKIIGESAGA (186 aa)) is the Glutamine amidotransferase type-1 domain. The Nucleophile role is filled by Cys266. Positions 267, 270, 308, 310, and 311 each coordinate L-glutamine. Active-site residues include His349 and Glu351.

Belongs to the CarA family. In terms of assembly, composed of two chains; the small (or glutamine) chain promotes the hydrolysis of glutamine to ammonia, which is used by the large (or ammonia) chain to synthesize carbamoyl phosphate. Tetramer of heterodimers (alpha,beta)4.

It carries out the reaction hydrogencarbonate + L-glutamine + 2 ATP + H2O = carbamoyl phosphate + L-glutamate + 2 ADP + phosphate + 2 H(+). The enzyme catalyses L-glutamine + H2O = L-glutamate + NH4(+). Its pathway is amino-acid biosynthesis; L-arginine biosynthesis; carbamoyl phosphate from bicarbonate: step 1/1. The protein operates within pyrimidine metabolism; UMP biosynthesis via de novo pathway; (S)-dihydroorotate from bicarbonate: step 1/3. Small subunit of the glutamine-dependent carbamoyl phosphate synthetase (CPSase). CPSase catalyzes the formation of carbamoyl phosphate from the ammonia moiety of glutamine, carbonate, and phosphate donated by ATP, constituting the first step of 2 biosynthetic pathways, one leading to arginine and/or urea and the other to pyrimidine nucleotides. The small subunit (glutamine amidotransferase) binds and cleaves glutamine to supply the large subunit with the substrate ammonia. The protein is Carbamoyl phosphate synthase small chain of Desulfovibrio desulfuricans (strain ATCC 27774 / DSM 6949 / MB).